The chain runs to 595 residues: Beta-lactamase-like protein ARB_00930 (595 aa).

The first 18 residues, 1–18 (MVVCFLWLLLPYAATTLS), serve as a signal peptide directing secretion. 2 N-linked (GlcNAc...) asparagine glycosylation sites follow: Asn-70 and Asn-102. Ser-117 acts as the Acyl-ester intermediate in catalysis. 3 N-linked (GlcNAc...) asparagine glycosylation sites follow: Asn-147, Asn-156, and Asn-195. Residue Tyr-235 is the Proton acceptor of the active site. Asn-249, Asn-461, and Asn-473 each carry an N-linked (GlcNAc...) asparagine glycan.

It belongs to the beta-lactamase family.

The protein localises to the secreted. It carries out the reaction a beta-lactam + H2O = a substituted beta-amino acid. This Arthroderma benhamiae (strain ATCC MYA-4681 / CBS 112371) (Trichophyton mentagrophytes) protein is Beta-lactamase-like protein ARB_00930.